Here is a 254-residue protein sequence, read N- to C-terminus: MSTDVSSAENEGGATVRTARVPKYYRLKKHLLDMTRTQTPGTPVPPERTLAAEFDTSRTTVRQALQELVVEGRLERIQGKGTFVAKPKVSQALQLTSYTEDMRAQGLEPTSQLLDIGYITADDRLAGLLDITAGGRVLRIERLRMANGEPMAIETTHLSAKRFPALRRSLVKYTSLYTALAEVYDVHLAEAEETIETSLATPREAGLLGTDVGLPMLMLSRHSQDRTGQPVEWVRSVYRGDRYKFVARLKRPQD.

The HTH gntR-type domain maps to 17 to 87 (RTARVPKYYR…QGKGTFVAKP (71 aa)). Residues 47 to 66 (ERTLAAEFDTSRTTVRQALQ) constitute a DNA-binding region (H-T-H motif).

It localises to the cytoplasm. Binding to the target genes is abolished by GlcN6P, a central molecule in N-acetylglucosamine metabolism. Global regulator that is part of the nutrient-sensing system. In the absence of glucosamine 6-P (GlcN6P), represses the phosphotransferase system (PTS) specific for the uptake of N-acetylglucosamine (PTSNag), and genes involved in the metabolism of chitin, as well as several genes involved in development, thereby linking carbon availability to morphogenesis. Also regulates the expression of the ABC transporters DasABC and NgcEFG, which are involved in N,N'-diacetylchitobiose ((GlcNAc)2) uptake. Binds to the DNA consensus sequence 5'-ACTGGTCTAGACCACT-3'. The chain is HTH-type transcriptional repressor DasR (dasR) from Streptomyces coelicolor (strain ATCC BAA-471 / A3(2) / M145).